Reading from the N-terminus, the 280-residue chain is Polyamine aminopropyltransferase (280 aa).

A PABS domain is found at 3 to 237 (DVYFMERDPY…YWWSFSVGSK (235 aa)). Residue Gln-33 coordinates S-methyl-5'-thioadenosine. Spermidine contacts are provided by His-64 and Asp-88. Residues Asp-108 and 139 to 140 (DG) each bind S-methyl-5'-thioadenosine. Asp-157 acts as the Proton acceptor in catalysis. 157-160 (DSTD) lines the spermidine pocket.

Belongs to the spermidine/spermine synthase family. Homodimer or homotetramer.

The protein localises to the cytoplasm. The catalysed reaction is S-adenosyl 3-(methylsulfanyl)propylamine + putrescine = S-methyl-5'-thioadenosine + spermidine + H(+). Its pathway is amine and polyamine biosynthesis; spermidine biosynthesis; spermidine from putrescine: step 1/1. In terms of biological role, catalyzes the irreversible transfer of a propylamine group from the amino donor S-adenosylmethioninamine (decarboxy-AdoMet) to putrescine (1,4-diaminobutane) to yield spermidine. This Hydrogenobaculum sp. (strain Y04AAS1) protein is Polyamine aminopropyltransferase.